We begin with the raw amino-acid sequence, 301 residues long: Phospholipase A1 VesT1.02 (301 aa).

6 disulfides stabilise this stretch: Cys87–Cys294, Cys176–Cys245, Cys181–Cys262, Cys219–Cys228, Cys240–Cys246, and Cys267–Cys269. Catalysis depends on Ser137, which acts as the Nucleophile. The active-site Charge relay system is the Asp165. His230 (charge relay system) is an active-site residue.

This sequence belongs to the AB hydrolase superfamily. Lipase family. In terms of processing, is not glycosylated. As to expression, expressed by the venom gland.

Its subcellular location is the secreted. The catalysed reaction is a 1,2-diacyl-sn-glycero-3-phosphocholine + H2O = a 2-acyl-sn-glycero-3-phosphocholine + a fatty acid + H(+). In terms of biological role, catalyzes the hydrolysis of phosphatidylcholine with phospholipase A1 activity. Shows hemolytic activity. This is Phospholipase A1 VesT1.02 from Vespa tropica (Greater banded hornet).